The chain runs to 629 residues: uncharacterized protein (629 aa).

4 disordered regions span residues 101 to 126 (SWKK…TPPT), 172 to 209 (PQKD…EEED), 315 to 339 (STPK…NSQR), and 448 to 468 (GENT…SEEP). Positions 200–209 (TEEEEEEEED) are enriched in acidic residues. Residue S334 is modified to Phosphoserine. Positions 448-463 (GENTANNGYGPQTLNE) are enriched in polar residues.

This is an uncharacterized protein from Schizosaccharomyces pombe (strain 972 / ATCC 24843) (Fission yeast).